Reading from the N-terminus, the 247-residue chain is uncharacterized protein (247 aa).

A disordered region spans residues 161 to 187 (KEQSDATSDATTSEKNKSPECPKATTE). Residues 172 to 187 (TSEKNKSPECPKATTE) show a composition bias toward basic and acidic residues.

This is an uncharacterized protein from Mus musculus (Mouse).